We begin with the raw amino-acid sequence, 752 residues long: Complement C2 (752 aa).

Residues 1-20 (MGPLMVLFCLLFLYPGLADS) form the signal peptide. Sushi domains are found at residues 22–86 (PSCP…VCKP), 87–146 (VRCP…VCDN), and 149–206 (GHCP…ICRQ). Cystine bridges form between Cys-24-Cys-64, Cys-51-Cys-84, Cys-89-Cys-131, Cys-117-Cys-144, Cys-151-Cys-191, and Cys-177-Cys-204. Asn-29 carries N-linked (GlcNAc...) asparagine glycosylation. Asn-112 carries N-linked (GlcNAc...) asparagine glycosylation. One can recognise a VWFA domain in the interval 254–452 (NLYLLLDCSQ…KALHQVFEHM (199 aa)). Positions 260–264 (DCSQS) match the MIDAS-like motif motif. Residues Ser-262 and Ser-264 each coordinate Mg(2+). Asn-290 and Asn-333 each carry an N-linked (GlcNAc...) asparagine glycan. Thr-337 is a binding site for Mg(2+). 3 disulfides stabilise this stretch: Cys-463–Cys-581, Cys-492–Cys-508, and Cys-584–Cys-600. Residues 464 to 744 (GVGNMSANAS…MQPWLRQHLG (281 aa)) form the Peptidase S1 domain. Residues Asn-467 and Asn-471 are each glycosylated (N-linked (GlcNAc...) asparagine). Active-site charge relay system residues include His-507 and Asp-561. N-linked (GlcNAc...) asparagine glycans are attached at residues Asn-621 and Asn-651. 2 disulfide bridges follow: Cys-638–Cys-665 and Cys-675–Cys-705. Catalysis depends on Ser-679, which acts as the Charge relay system.

It belongs to the peptidase S1 family. In terms of assembly, serine protease component of the C3 convertase, also named C4bC2b, composed of the serine protease complement C2b and complement C4b. Serine protease component of the C5 convertase, also named C4bC2bC3b, composed of the serine protease complement C2b, complement C3b, as well as complement C4b. Mg(2+) is required as a cofactor. It depends on Mn(2+) as a cofactor. Cleaved and activated by different proteases depending on the complement pathway to generate complement C2a and serine protease complement C2b chains. Cleaved and activated by C1S following activation by the classical complement system. Cleaved and activated by MASP2 following activation by the lectin complement system. Cleaved and activated by GZMK following activation by the GZMK complement system.

The protein localises to the secreted. Its subcellular location is the cell surface. It catalyses the reaction Selective cleavage of Arg-|-Ser bond in complement component C3 alpha-chain to form C3a and C3b, and Arg-|-Xaa bond in complement component C5 alpha-chain to form C5a and C5b.. Functionally, precursor of the catalytic component of the C3 and C5 convertase complexes, which are part of the complement pathway, a cascade of proteins that leads to phagocytosis and breakdown of pathogens and signaling that strengthens the adaptive immune system. Component C2 is part of the classical, lectin and GZMK complement systems. Its function is as follows. Catalytic component of the complement C3 and C5 convertase complexes. Following complement activation, recruited to the surface of pathogens by complement C4b opsonin to form the C3 convertase, or C3b and C4b opsonins to form the C5 convertase. As part of the C3 convertase, cleaves and activate C3 into C3a anaphylatoxin and C3b opsonin, the next components of the complement pathways. As part of the C5 convertase, cleaves and activate C5 into C5a anaphylatoxin and C5b component of the membrane attack complex. In Pan troglodytes (Chimpanzee), this protein is Complement C2.